We begin with the raw amino-acid sequence, 31 residues long: Beta-endorphin (31 aa).

Belongs to the POMC family.

The protein resides in the secreted. In terms of biological role, beta-endorphin and Met-enkephalin are endogenous opiates. The protein is Beta-endorphin (POMC) of Camelus dromedarius (Dromedary).